The chain runs to 177 residues: LOB domain-containing protein 33 (177 aa).

The region spanning 6-108 is the LOB domain; sequence SSCGACKFLR…EEIEFLGSQM (103 aa).

The protein belongs to the LOB domain-containing protein family. Expressed in roots.

This chain is LOB domain-containing protein 33 (LBD33), found in Arabidopsis thaliana (Mouse-ear cress).